The following is a 226-amino-acid chain: MAKLKEPIIAINFKTYIEATGKRALEIAKAAERVWKETGITIVVAPQLADLRMIAESVEIPVFAQHIDPIKPGSHTGHVLPEAVKEVGAVGTLLNHSENRMILADLEAAIRRAEEVGLMTMVCSNNPAVSAAVAALGPDYVAVEPPELIGTGIPVSKAKPEVVTNTVELVKKVNPDVGVLTGAGISTGEDVKKALELGSVGVLLASGVTKAKDPENAIRDLVSLII.

Substrate is bound at residue 12-14; it reads NFK. His96 serves as the catalytic Electrophile. The active-site Proton acceptor is the Glu144. Substrate-binding positions include Ile149, Gly184, and 205–206; that span reads AS.

This sequence belongs to the triosephosphate isomerase family. Homotetramer; dimer of dimers.

It localises to the cytoplasm. The enzyme catalyses D-glyceraldehyde 3-phosphate = dihydroxyacetone phosphate. It functions in the pathway carbohydrate biosynthesis; gluconeogenesis. It participates in carbohydrate degradation; glycolysis; D-glyceraldehyde 3-phosphate from glycerone phosphate: step 1/1. Involved in the gluconeogenesis. Catalyzes stereospecifically the conversion of dihydroxyacetone phosphate (DHAP) to D-glyceraldehyde-3-phosphate (G3P). The protein is Triosephosphate isomerase of Thermococcus kodakarensis (strain ATCC BAA-918 / JCM 12380 / KOD1) (Pyrococcus kodakaraensis (strain KOD1)).